Consider the following 508-residue polypeptide: Lysine--tRNA ligase (508 aa).

Positions 416 and 423 each coordinate Mg(2+).

It belongs to the class-II aminoacyl-tRNA synthetase family. As to quaternary structure, homodimer. It depends on Mg(2+) as a cofactor.

It localises to the cytoplasm. The catalysed reaction is tRNA(Lys) + L-lysine + ATP = L-lysyl-tRNA(Lys) + AMP + diphosphate. This Prochlorococcus marinus (strain MIT 9313) protein is Lysine--tRNA ligase.